The chain runs to 62 residues: Potassium channel toxin kappa-KTx 3.2 (62 aa).

The N-terminal stretch at 1-26 is a signal peptide; sequence MKSTLMTASLLILVLLSIVDYASVYA. The propeptide occupies 27 to 36; it reads ELIDSEISME. 2 disulfides stabilise this stretch: C43-C61 and C47-C57.

It belongs to the short scorpion toxin superfamily. Potassium channel inhibitor kappa-KTx family. Kappa-KTx 3 subfamily. As to expression, expressed by the venom gland.

The protein localises to the secreted. Functionally, potassium channel inhibitor (Kv). This is Potassium channel toxin kappa-KTx 3.2 from Heterometrus petersii (Asian forest scorpion).